The sequence spans 172 residues: ADDKNPLEECFREADYEEFLEIAKVTVLEASERNDKEDWYANLGPMRLPEKLNEFVQETENGWYFIKYPVKPSEEGKSAGQLYEESLRKSAGQLYQESLGKAHDDIFAYEKRFDEIVDGMDKLPTSMYQAIQERINFKPPLPPKKYAMGAITTFTPYQFQHFSEALTAPVGR.

44-47 (GPMR) lines the FAD pocket. Substrate-binding residues include Arg-47 and His-103.

The protein belongs to the flavin monoamine oxidase family. FIG1 subfamily. Heterodimer; non-covalently linked. FAD is required as a cofactor. In terms of processing, N-glycosylated. As to expression, expressed by the venom gland.

The protein resides in the secreted. The catalysed reaction is an L-alpha-amino acid + O2 + H2O = a 2-oxocarboxylate + H2O2 + NH4(+). It catalyses the reaction L-leucine + O2 + H2O = 4-methyl-2-oxopentanoate + H2O2 + NH4(+). The enzyme catalyses L-phenylalanine + O2 + H2O = 3-phenylpyruvate + H2O2 + NH4(+). It carries out the reaction L-tryptophan + O2 + H2O = indole-3-pyruvate + H2O2 + NH4(+). The catalysed reaction is L-methionine + O2 + H2O = 4-methylsulfanyl-2-oxobutanoate + H2O2 + NH4(+). It catalyses the reaction L-isoleucine + O2 + H2O = (S)-3-methyl-2-oxopentanoate + H2O2 + NH4(+). The enzyme catalyses L-arginine + O2 + H2O = 5-guanidino-2-oxopentanoate + H2O2 + NH4(+). It carries out the reaction L-tyrosine + O2 + H2O = 3-(4-hydroxyphenyl)pyruvate + H2O2 + NH4(+). Its activity is regulated as follows. Activity is increased by Mn(2+) ions. Inhibited by Zn(2+), Ni(2+), Co(2+), Cu(2+) and Al(3+). No significant activity change by Na(+), K(+), Ca(2+), Mg(2+) and Ba(2+) ions. Both isoform are completely inhibited by L-Cys and reduced glutathione. O-phenanthroline, beta-mercaptoethanol and PMSF completely inhibit the enzymatic activity of LAAOII, but have no activity on LAAOI. Iodoacetic acid inhibits the enzymatic activity of LAAOII by 46% but has no effect on the LAAOI activity. Functionally, catalyzes an oxidative deamination of predominantly hydrophobic and aromatic L-amino acids, thus producing hydrogen peroxide that may contribute to the diverse toxic effects of this enzyme. Shows high specificity for L-Arg, L-Met, L-Phe, L-Leu, L-Tyr, L-Ile and L-Trp, low specificity for L-Val, L-Ala, L-Asn, L-Gln, and no specificity for L-Pro, L-Ser, L-Thr, L-Cys, L-Gly and L-Asp. Exhibits diverse biological activities, such as hemorrhage, hemolysis, edema, antibacterial and antiparasitic activities, as well as regulation of platelet aggregation. Its effect on platelets is controversial, since it either induces aggregation or inhibits agonist-induced aggregation. These different effects are probably due to different experimental conditions. The chain is L-amino acid oxidase from Cerastes cerastes (Horned desert viper).